The chain runs to 96 residues: MNILGMKLFAHHKGGGSTANGRNSAGRRLGAKAGDGQEIHAGSIIYRQRGTKIHPGKNVGQGGDDTLFALVNGVVKFERLGKYKKQVSVYPAEEAK.

Residues Lys-13–Ala-33 form a disordered region.

It belongs to the bacterial ribosomal protein bL27 family.

The chain is Large ribosomal subunit protein bL27 from Lactobacillus acidophilus (strain ATCC 700396 / NCK56 / N2 / NCFM).